A 158-amino-acid polypeptide reads, in one-letter code: uncharacterized protein (158 aa).

The N-terminal stretch at 1-16 (MFRPILILTILSCVLA) is a signal peptide. N122 carries an N-linked (GlcNAc...) asparagine glycan.

This is an uncharacterized protein from Caenorhabditis elegans.